Consider the following 425-residue polypeptide: Glutamyl-tRNA reductase (425 aa).

Residues 49–52, Ser107, 112–114, and Gln118 each bind substrate; these read TCNR and EPQ. The active-site Nucleophile is the Cys50. NADP(+) is bound at residue 187-192; that stretch reads GAGETI.

This sequence belongs to the glutamyl-tRNA reductase family. In terms of assembly, homodimer.

It catalyses the reaction (S)-4-amino-5-oxopentanoate + tRNA(Glu) + NADP(+) = L-glutamyl-tRNA(Glu) + NADPH + H(+). It functions in the pathway porphyrin-containing compound metabolism; protoporphyrin-IX biosynthesis; 5-aminolevulinate from L-glutamyl-tRNA(Glu): step 1/2. Catalyzes the NADPH-dependent reduction of glutamyl-tRNA(Glu) to glutamate 1-semialdehyde (GSA). The protein is Glutamyl-tRNA reductase of Pseudomonas entomophila (strain L48).